Consider the following 133-residue polypeptide: Putative dispanin subfamily A member 2d (133 aa).

Residues 1 to 57 (MNHTVQTFFSPVNSGQPPNYEMLKEEHKVAVLGVPHNPAPPTSTVIHIRSKTSVPHH) lie on the Extracellular side of the membrane. A Glycyl lysine isopeptide (Lys-Gly) (interchain with G-Cter in ubiquitin) cross-link involves residue lysine 24. The chain crosses the membrane as a helical span at residues 58 to 78 (VVWSLFNTLFMNPCCLGFIAF). The Cytoplasmic segment spans residues 79–107 (AYSVKSRDRKMVGNVTGAQAYASTTKCLN). Residues lysine 83, lysine 88, and lysine 104 each participate in a glycyl lysine isopeptide (Lys-Gly) (interchain with G-Cter in ubiquitin) cross-link. A helical transmembrane segment spans residues 108-128 (IWALILGILMTILLIIIPVLI). Topologically, residues 129–133 (FQAHR) are extracellular.

This sequence belongs to the CD225/Dispanin family.

Its subcellular location is the membrane. In Homo sapiens (Human), this protein is Putative dispanin subfamily A member 2d.